The sequence spans 225 residues: UPF0758 protein BPP1850 (225 aa).

The region spanning Ala-103–Leu-225 is the MPN domain. The Zn(2+) site is built by His-174, His-176, and Asp-187. Positions His-174 to Asp-187 match the JAMM motif motif.

It belongs to the UPF0758 family.

This is UPF0758 protein BPP1850 from Bordetella parapertussis (strain 12822 / ATCC BAA-587 / NCTC 13253).